The sequence spans 263 residues: MTTAVGASQQLDEVGDRRGTGTEFANEIFAVVDVLNRESGLRRAVSDTGSETKARQGLIDAVFTSKVSPDCKELLDATTTCKWRSPAALTRALERQGVRAVLRGARQADRFEAVADELFHVSRLVRGQAALQVALGDPNRSVADRQELLMKLVGGQVSEETLVLARRAVVASDSTFEQVIDGYLHVAAEMADRRRAIVTTAKALTDAQRAEMVKQLERITGSPIELSEVVDPTVLGGALINLGDEVIDSTVAHRLDQARRELG.

It belongs to the ATPase delta chain family. As to quaternary structure, F-type ATPases have 2 components, F(1) - the catalytic core - and F(0) - the membrane proton channel. F(1) has five subunits: alpha(3), beta(3), gamma(1), delta(1), epsilon(1). F(0) has three main subunits: a(1), b(2) and c(10-14). The alpha and beta chains form an alternating ring which encloses part of the gamma chain. F(1) is attached to F(0) by a central stalk formed by the gamma and epsilon chains, while a peripheral stalk is formed by the delta and b chains.

The protein resides in the cell membrane. F(1)F(0) ATP synthase produces ATP from ADP in the presence of a proton or sodium gradient. F-type ATPases consist of two structural domains, F(1) containing the extramembraneous catalytic core and F(0) containing the membrane proton channel, linked together by a central stalk and a peripheral stalk. During catalysis, ATP synthesis in the catalytic domain of F(1) is coupled via a rotary mechanism of the central stalk subunits to proton translocation. In terms of biological role, this protein is part of the stalk that links CF(0) to CF(1). It either transmits conformational changes from CF(0) to CF(1) or is implicated in proton conduction. This is ATP synthase subunit delta from Cutibacterium acnes (strain DSM 16379 / KPA171202) (Propionibacterium acnes).